Reading from the N-terminus, the 103-residue chain is Pyrimidine/purine nucleoside phosphorylase (103 aa).

This sequence belongs to the nucleoside phosphorylase PpnP family.

It carries out the reaction a purine D-ribonucleoside + phosphate = a purine nucleobase + alpha-D-ribose 1-phosphate. The catalysed reaction is adenosine + phosphate = alpha-D-ribose 1-phosphate + adenine. It catalyses the reaction cytidine + phosphate = cytosine + alpha-D-ribose 1-phosphate. The enzyme catalyses guanosine + phosphate = alpha-D-ribose 1-phosphate + guanine. It carries out the reaction inosine + phosphate = alpha-D-ribose 1-phosphate + hypoxanthine. The catalysed reaction is thymidine + phosphate = 2-deoxy-alpha-D-ribose 1-phosphate + thymine. It catalyses the reaction uridine + phosphate = alpha-D-ribose 1-phosphate + uracil. The enzyme catalyses xanthosine + phosphate = alpha-D-ribose 1-phosphate + xanthine. Functionally, catalyzes the phosphorolysis of diverse nucleosides, yielding D-ribose 1-phosphate and the respective free bases. Can use uridine, adenosine, guanosine, cytidine, thymidine, inosine and xanthosine as substrates. Also catalyzes the reverse reactions. The chain is Pyrimidine/purine nucleoside phosphorylase from Methylococcus capsulatus (strain ATCC 33009 / NCIMB 11132 / Bath).